We begin with the raw amino-acid sequence, 342 residues long: Ketol-acid reductoisomerase (NADP(+)) (342 aa).

The 180-residue stretch at 2-181 (VKVYYNGDIK…GGARAGVLET (180 aa)) folds into the KARI N-terminal Rossmann domain. Residues 25–28 (YGSQ), Arg48, Ser52, and 82–85 (DEQQ) contribute to the NADP(+) site. Residue His107 is part of the active site. Gly133 is an NADP(+) binding site. One can recognise a KARI C-terminal knotted domain in the interval 182-327 (TFKEETETDL…RKLREMMPFV (146 aa)). Mg(2+) contacts are provided by Asp190, Glu194, Glu226, and Glu230. Ser251 is a substrate binding site.

Belongs to the ketol-acid reductoisomerase family. It depends on Mg(2+) as a cofactor.

It carries out the reaction (2R)-2,3-dihydroxy-3-methylbutanoate + NADP(+) = (2S)-2-acetolactate + NADPH + H(+). The enzyme catalyses (2R,3R)-2,3-dihydroxy-3-methylpentanoate + NADP(+) = (S)-2-ethyl-2-hydroxy-3-oxobutanoate + NADPH + H(+). It participates in amino-acid biosynthesis; L-isoleucine biosynthesis; L-isoleucine from 2-oxobutanoate: step 2/4. Its pathway is amino-acid biosynthesis; L-valine biosynthesis; L-valine from pyruvate: step 2/4. Involved in the biosynthesis of branched-chain amino acids (BCAA). Catalyzes an alkyl-migration followed by a ketol-acid reduction of (S)-2-acetolactate (S2AL) to yield (R)-2,3-dihydroxy-isovalerate. In the isomerase reaction, S2AL is rearranged via a Mg-dependent methyl migration to produce 3-hydroxy-3-methyl-2-ketobutyrate (HMKB). In the reductase reaction, this 2-ketoacid undergoes a metal-dependent reduction by NADPH to yield (R)-2,3-dihydroxy-isovalerate. The polypeptide is Ketol-acid reductoisomerase (NADP(+)) (Bacillus licheniformis (strain ATCC 14580 / DSM 13 / JCM 2505 / CCUG 7422 / NBRC 12200 / NCIMB 9375 / NCTC 10341 / NRRL NRS-1264 / Gibson 46)).